The chain runs to 196 residues: Serine recombinase PinR (196 aa).

One can recognise a Resolvase/invertase-type recombinase catalytic domain in the interval 3–143 (RIFAYCRIST…SGIVRARGAG (141 aa)). Residue S11 is the O-(5'-phospho-DNA)-serine intermediate of the active site.

It belongs to the site-specific recombinase resolvase family.

This Escherichia coli (strain K12) protein is Serine recombinase PinR (pinR).